Here is a 232-residue protein sequence, read N- to C-terminus: Exosome complex component RRP40 (232 aa).

It belongs to the RRP40 family. Component of the RNA exosome complex. Specifically part of the catalytically inactive RNA exosome core complex.

The protein localises to the cytoplasm. It is found in the nucleus. Its subcellular location is the nucleolus. Its function is as follows. Non-catalytic component of the RNA exosome complex which has 3'-&gt;5' exoribonuclease activity and participates in a multitude of cellular RNA processing and degradation events. In the nucleus, the RNA exosome complex is involved in proper maturation of stable RNA species such as rRNA, snRNA and snoRNA, in the elimination of RNA processing by-products and non-coding 'pervasive' transcripts such as antisense RNA species, and of mRNAs with processing defects, thereby limiting or excluding their export to the cytoplasm. In the cytoplasm, the RNA exosome complex is involved in general mRNA turnover and specifically degrades inherently unstable mRNAs containing AU-rich elements (AREs) within their 3' untranslated regions, and in RNA surveillance pathways, preventing translation of aberrant mRNAs. The catalytic inactive RNA exosome core complex of 9 subunits is proposed to play a pivotal role in the binding and presentation of RNA for ribonucleolysis, and to serve as a scaffold for the association with catalytic subunits and accessory proteins or complexes. Required generally for normal embryonic and neuronal development. Also plays a critical role in the maintenance of neuronal function in mature flies by controlling the levels of specific mRNAs such as the synaptic regulator Arc1. In Drosophila melanogaster (Fruit fly), this protein is Exosome complex component RRP40.